We begin with the raw amino-acid sequence, 494 residues long: Aldehyde dehydrogenase (494 aa).

223–228 (GSTTAG) provides a ligand contact to NAD(+). Catalysis depends on residues Glu245 and Cys279.

Belongs to the aldehyde dehydrogenase family.

It catalyses the reaction an aldehyde + NAD(+) + H2O = a carboxylate + NADH + 2 H(+). It functions in the pathway mycotoxin biosynthesis. Aldehyde dehydrogenase; part of the gene cluster that mediates the biosynthesis of the selective antifungal agent ascochitine, an o-quinone methide that plays a possible protective role against other microbial competitors in nature and is considered to be important for pathogenicity of legume-associated Didymella species. The pathway probably begins with the synthesis of a keto-aldehyde intermediate by the ascochitine non-reducing polyketide synthase pksAC from successive condensations of 4 malonyl-CoA units, presumably with a simple acetyl-CoA starter unit. Release of the keto-aldehyde intermediate is consistent with the presence of the C-terminal reductive release domain. The HR-PKS (orf7) probably makes a diketide starter unit which is passed to the non-reducing polyketide synthase pksAC for further extension, producing ascochital and ascochitine. The aldehyde dehydrogenase (orf1), the 2-oxoglutarate-dependent dioxygenase (orf3) and the dehydrogenase (orf9) are probably involved in subsequent oxidations of methyl groups to the carboxylic acid of the heterocyclic ring. The ascochitine gene cluster also includes a gene encoding a short peptide with a cupin domain (orf2) that is often found in secondary metabolite gene clusters and which function has still to be determined. The polypeptide is Aldehyde dehydrogenase (Didymella fabae (Leaf and pod spot disease fungus)).